The sequence spans 228 residues: MASSTLSPVTQLCSSKSGLSSVSQCLLVKPMKINSHGLGKDKRMKVKCMATSIPADDRVPDMEKRNLMNLLLLGALSLPTAGMLVPYGTFFVPPGSGGGSGGTPAKDALGNDVIASEWLKTHPPGNRTLTQGLKGDPTYLVVENDGTLATYGINAVCTHLGCVVPFNAAENKFICPCHGSQYNNQGRVVRGPAPLSLALAHADIDDGKVVFVPWVETDFRTGEDPWWA.

The transit peptide at 1–49 (MASSTLSPVTQLCSSKSGLSSVSQCLLVKPMKINSHGLGKDKRMKVKCM) directs the protein to the chloroplast. A helical membrane pass occupies residues 72 to 92 (LLGALSLPTAGMLVPYGTFFV). The Rieske domain occupies 115–211 (ASEWLKTHPP…ADIDDGKVVF (97 aa)). [2Fe-2S] cluster-binding residues include C157, H159, C175, and H178. A disulfide bridge links C162 with C177.

Belongs to the Rieske iron-sulfur protein family. In terms of assembly, the 4 large subunits of the cytochrome b6-f complex are cytochrome b6, subunit IV (17 kDa polypeptide, petD), cytochrome f and the Rieske protein, while the 4 small subunits are petG, petL, petM and petN. The complex functions as a dimer. The cofactor is [2Fe-2S] cluster.

It is found in the plastid. Its subcellular location is the chloroplast thylakoid membrane. It carries out the reaction 2 oxidized [plastocyanin] + a plastoquinol + 2 H(+)(in) = 2 reduced [plastocyanin] + a plastoquinone + 4 H(+)(out). In terms of biological role, component of the cytochrome b6-f complex, which mediates electron transfer between photosystem II (PSII) and photosystem I (PSI), cyclic electron flow around PSI, and state transitions. The polypeptide is Cytochrome b6-f complex iron-sulfur subunit 1, chloroplastic (petC1) (Nicotiana tabacum (Common tobacco)).